We begin with the raw amino-acid sequence, 299 residues long: Ethylmalonyl-CoA decarboxylase (299 aa).

Lysine 209 bears the N6-acetyllysine; alternate mark. Lysine 209 carries the N6-succinyllysine; alternate modification. Lysine 293 carries the post-translational modification N6-succinyllysine.

Belongs to the enoyl-CoA hydratase/isomerase family.

It localises to the cytoplasm. Its subcellular location is the cytosol. It catalyses the reaction (2S)-ethylmalonyl-CoA + H(+) = butanoyl-CoA + CO2. It carries out the reaction (S)-methylmalonyl-CoA + H(+) = propanoyl-CoA + CO2. The catalysed reaction is (2R)-ethylmalonyl-CoA + H(+) = butanoyl-CoA + CO2. Functionally, decarboxylates ethylmalonyl-CoA, a potentially toxic metabolite, to form butyryl-CoA, suggesting it might be involved in metabolite proofreading. Acts preferentially on (S)-ethylmalonyl-CoA but also has some activity on the (R)-isomer. Also has methylmalonyl-CoA decarboxylase activity at lower level. The protein is Ethylmalonyl-CoA decarboxylase (Echdc1) of Rattus norvegicus (Rat).